Here is a 508-residue protein sequence, read N- to C-terminus: Photosystem II CP47 reaction center protein (508 aa).

Helical transmembrane passes span 21 to 36 (SVHI…WAGS), 101 to 115 (IVFS…IWHW), 140 to 156 (GIHL…FGAF), 203 to 218 (IAAG…FHLS), 237 to 252 (VLSS…AFVV), and 457 to 472 (SFAL…HGAR).

Belongs to the PsbB/PsbC family. PsbB subfamily. In terms of assembly, PSII is composed of 1 copy each of membrane proteins PsbA, PsbB, PsbC, PsbD, PsbE, PsbF, PsbH, PsbI, PsbJ, PsbK, PsbL, PsbM, PsbT, PsbX, PsbY, PsbZ, Psb30/Ycf12, at least 3 peripheral proteins of the oxygen-evolving complex and a large number of cofactors. It forms dimeric complexes. Requires Binds multiple chlorophylls. PSII binds additional chlorophylls, carotenoids and specific lipids. as cofactor.

It is found in the plastid. Its subcellular location is the chloroplast thylakoid membrane. Its function is as follows. One of the components of the core complex of photosystem II (PSII). It binds chlorophyll and helps catalyze the primary light-induced photochemical processes of PSII. PSII is a light-driven water:plastoquinone oxidoreductase, using light energy to abstract electrons from H(2)O, generating O(2) and a proton gradient subsequently used for ATP formation. The protein is Photosystem II CP47 reaction center protein of Aethionema cordifolium (Lebanon stonecress).